A 518-amino-acid chain; its full sequence is Light-independent protochlorophyllide reductase subunit B (518 aa).

[4Fe-4S] cluster is bound at residue aspartate 36. Catalysis depends on aspartate 285, which acts as the Proton donor. 420-421 (GL) serves as a coordination point for substrate.

This sequence belongs to the ChlB/BchB/BchZ family. Protochlorophyllide reductase is composed of three subunits; BchL, BchN and BchB. Forms a heterotetramer of two BchB and two BchN subunits. [4Fe-4S] cluster is required as a cofactor.

It carries out the reaction chlorophyllide a + oxidized 2[4Fe-4S]-[ferredoxin] + 2 ADP + 2 phosphate = protochlorophyllide a + reduced 2[4Fe-4S]-[ferredoxin] + 2 ATP + 2 H2O. It participates in porphyrin-containing compound metabolism; bacteriochlorophyll biosynthesis (light-independent). Its function is as follows. Component of the dark-operative protochlorophyllide reductase (DPOR) that uses Mg-ATP and reduced ferredoxin to reduce ring D of protochlorophyllide (Pchlide) to form chlorophyllide a (Chlide). This reaction is light-independent. The NB-protein (BchN-BchB) is the catalytic component of the complex. This is Light-independent protochlorophyllide reductase subunit B from Bradyrhizobium sp. (strain ORS 278).